The chain runs to 113 residues: MGEHAIKRHMRQRKPTKHPLAQKRGARILVFTDDPRRSVLIVPGCHLDSMRREKNAYYFQDGNALVGMVVSGGTVEYDADDRTYVVQLTDGRHTTESSFEHSSPSRSPQSDDL.

Disordered regions lie at residues 1–22 (MGEHAIKRHMRQRKPTKHPLAQ) and 90–113 (DGRHTTESSFEHSSPSRSPQSDDL). The segment covering 90–99 (DGRHTTESSF) has biased composition (basic and acidic residues). Low complexity predominate over residues 100–113 (EHSSPSRSPQSDDL).

This is an uncharacterized protein from Mycobacterium tuberculosis (strain ATCC 25618 / H37Rv).